A 407-amino-acid chain; its full sequence is uncharacterized protein (407 aa).

12 consecutive transmembrane segments (helical) span residues 22 to 42, 51 to 71, 101 to 121, 126 to 146, 154 to 174, 179 to 199, 227 to 247, 258 to 278, 286 to 306, 309 to 329, 347 to 367, and 369 to 389; these read IVSV…PLAV, LGFS…ATLA, ALLL…VLLV, VLGI…IGRV, VISW…PVGV, ALIP…GYYL, GLGL…ITLY, LSLT…ANTI, VAIV…LAPV, VALV…PALG, AYSV…GYVA, and AFGY…GVAL.

The protein belongs to the major facilitator superfamily. YhhS family.

It is found in the cell inner membrane. This is an uncharacterized protein from Burkholderia pseudomallei (strain 1106a).